The sequence spans 544 residues: Chaperonin GroEL (544 aa).

ATP contacts are provided by residues 29–32 (TLGP), 86–90 (DGTTT), Gly-413, 476–478 (NAL), and Asp-492.

Belongs to the chaperonin (HSP60) family. As to quaternary structure, forms a cylinder of 14 subunits composed of two heptameric rings stacked back-to-back. Interacts with the co-chaperonin GroES.

The protein resides in the cytoplasm. It carries out the reaction ATP + H2O + a folded polypeptide = ADP + phosphate + an unfolded polypeptide.. Its function is as follows. Together with its co-chaperonin GroES, plays an essential role in assisting protein folding. The GroEL-GroES system forms a nano-cage that allows encapsulation of the non-native substrate proteins and provides a physical environment optimized to promote and accelerate protein folding. The chain is Chaperonin GroEL from Desulfitobacterium hafniense (strain DSM 10664 / DCB-2).